The chain runs to 332 residues: Protein pelota homolog (332 aa).

Belongs to the eukaryotic release factor 1 family. Pelota subfamily. Monomer. It depends on a divalent metal cation as a cofactor.

It localises to the cytoplasm. In terms of biological role, may function in recognizing stalled ribosomes, interact with stem-loop structures in stalled mRNA molecules, and effect endonucleolytic cleavage of the mRNA. May play a role in the release non-functional ribosomes and degradation of damaged mRNAs. Has endoribonuclease activity. The sequence is that of Protein pelota homolog from Pyrobaculum aerophilum (strain ATCC 51768 / DSM 7523 / JCM 9630 / CIP 104966 / NBRC 100827 / IM2).